The chain runs to 180 residues: Crossover junction endodeoxyribonuclease RuvC (180 aa).

Residues aspartate 7, glutamate 66, and aspartate 138 contribute to the active site. Aspartate 7, glutamate 66, and aspartate 138 together coordinate Mg(2+).

The protein belongs to the RuvC family. As to quaternary structure, homodimer which binds Holliday junction (HJ) DNA. The HJ becomes 2-fold symmetrical on binding to RuvC with unstacked arms; it has a different conformation from HJ DNA in complex with RuvA. In the full resolvosome a probable DNA-RuvA(4)-RuvB(12)-RuvC(2) complex forms which resolves the HJ. The cofactor is Mg(2+).

It localises to the cytoplasm. It carries out the reaction Endonucleolytic cleavage at a junction such as a reciprocal single-stranded crossover between two homologous DNA duplexes (Holliday junction).. Its function is as follows. The RuvA-RuvB-RuvC complex processes Holliday junction (HJ) DNA during genetic recombination and DNA repair. Endonuclease that resolves HJ intermediates. Cleaves cruciform DNA by making single-stranded nicks across the HJ at symmetrical positions within the homologous arms, yielding a 5'-phosphate and a 3'-hydroxyl group; requires a central core of homology in the junction. The consensus cleavage sequence is 5'-(A/T)TT(C/G)-3'. Cleavage occurs on the 3'-side of the TT dinucleotide at the point of strand exchange. HJ branch migration catalyzed by RuvA-RuvB allows RuvC to scan DNA until it finds its consensus sequence, where it cleaves and resolves the cruciform DNA. The polypeptide is Crossover junction endodeoxyribonuclease RuvC (Burkholderia lata (strain ATCC 17760 / DSM 23089 / LMG 22485 / NCIMB 9086 / R18194 / 383)).